The sequence spans 466 residues: 3-isopropylmalate dehydratase large subunit (466 aa).

3 residues coordinate [4Fe-4S] cluster: Cys347, Cys407, and Cys410.

It belongs to the aconitase/IPM isomerase family. LeuC type 1 subfamily. As to quaternary structure, heterodimer of LeuC and LeuD. [4Fe-4S] cluster serves as cofactor.

It carries out the reaction (2R,3S)-3-isopropylmalate = (2S)-2-isopropylmalate. It functions in the pathway amino-acid biosynthesis; L-leucine biosynthesis; L-leucine from 3-methyl-2-oxobutanoate: step 2/4. Catalyzes the isomerization between 2-isopropylmalate and 3-isopropylmalate, via the formation of 2-isopropylmaleate. This chain is 3-isopropylmalate dehydratase large subunit, found in Shigella sonnei (strain Ss046).